The chain runs to 909 residues: Protein NLP1 (909 aa).

4 disordered regions span residues 51–71 (KSLK…DNSP), 536–556 (KEDP…PVPN), 568–605 (ASTP…RAKT), and 690–745 (NSPN…ENTG). Residues 55–70 (QTEQSPSASTAMNDNS) show a composition bias toward polar residues. The region spanning 595–676 (RRPGEKKRAK…MDSVQGAQGS (82 aa)) is the RWP-RK domain. Over residues 690–716 (NSPNMSSNGPSLKSNEQPSHLNAQTDN) the composition is skewed to polar residues. Residues 725 to 745 (RSPSSSCSKSSGSSNNNENTG) are compositionally biased toward low complexity. A PB1 domain is found at 811–894 (AIKVKATFGE…HTIKISLNEA (84 aa)).

Its subcellular location is the nucleus. In terms of biological role, probable transcription factor. In Arabidopsis thaliana (Mouse-ear cress), this protein is Protein NLP1 (NLP1).